A 503-amino-acid chain; its full sequence is Activin receptor type-1-like (503 aa).

An N-terminal signal peptide occupies residues Met1–Gly21. At Asp22–Gln118 the chain is on the extracellular side. 3 cysteine pairs are disulfide-bonded: Cys34–Cys51, Cys36–Cys41, and Cys46–Cys69. Residues His73–Leu76 are mediates specificity for BMP ligand. Cystine bridges form between Cys77-Cys89 and Cys90-Cys95. N-linked (GlcNAc...) asparagine glycosylation occurs at Asn98. A helical membrane pass occupies residues Leu119–Trp141. Residues His142–Gln503 lie on the Cytoplasmic side of the membrane. A phosphoserine mark is found at Ser155, Ser160, and Ser161. In terms of domain architecture, GS spans Ser172–Gln201. The Protein kinase domain maps to Val202–Ile492. Residues Val208–Val216 and Lys229 each bind ATP. Asp330 serves as the catalytic Proton acceptor.

Belongs to the protein kinase superfamily. TKL Ser/Thr protein kinase family. TGFB receptor subfamily. Interacts with TSC22D1/TSC-22. Requires Mg(2+) as cofactor. It depends on Mn(2+) as a cofactor.

Its subcellular location is the cell membrane. It carries out the reaction L-threonyl-[receptor-protein] + ATP = O-phospho-L-threonyl-[receptor-protein] + ADP + H(+). The catalysed reaction is L-seryl-[receptor-protein] + ATP = O-phospho-L-seryl-[receptor-protein] + ADP + H(+). Type I receptor for TGF-beta family ligands BMP9/GDF2 and BMP10 and important regulator of normal blood vessel development. On ligand binding, forms a receptor complex consisting of two type II and two type I transmembrane serine/threonine kinases. Type II receptors phosphorylate and activate type I receptors which autophosphorylate, then bind and activate SMAD transcriptional regulators. May bind activin as well. This chain is Activin receptor type-1-like (ACVRL1), found in Pongo abelii (Sumatran orangutan).